An 83-amino-acid polypeptide reads, in one-letter code: Toxin To12 (83 aa).

Residues Met-1–Ala-19 form the signal peptide. Positions Lys-20–Gly-82 constitute an LCN-type CS-alpha/beta domain. Cystine bridges form between Cys-30–Cys-81, Cys-34–Cys-57, Cys-42–Cys-62, and Cys-46–Cys-64. Cys-81 is subject to Cysteine amide.

This sequence belongs to the long (4 C-C) scorpion toxin superfamily. Sodium channel inhibitor family. Beta subfamily. As to expression, expressed by the venom gland.

The protein resides in the secreted. Beta toxins bind voltage-independently at site-4 of sodium channels (Nav) and shift the voltage of activation toward more negative potentials thereby affecting sodium channel activation and promoting spontaneous and repetitive firing. The chain is Toxin To12 from Tityus obscurus (Amazonian scorpion).